The following is a 338-amino-acid chain: Malate dehydrogenase, mitochondrial (338 aa).

The N-terminal 24 residues, 1–24, are a transit peptide targeting the mitochondrion; the sequence is MLSALARPAGAALRRSFSTSAQNN. Residues 31-37 and D57 contribute to the NAD(+) site; that span reads GASGGIG. S33 carries O-linked (GlcNAc) serine glycosylation. 2 positions are modified to N6-acetyllysine; alternate: K78 and K91. An N6-succinyllysine; alternate mark is found at K78 and K91. Residues R104 and R110 each coordinate substrate. NAD(+)-binding positions include N117 and 140–142; that span reads ISN. N142 is a substrate binding site. K165 bears the N6-acetyllysine mark. Residue R176 coordinates substrate. The residue at position 185 (K185) is an N6-acetyllysine; alternate. K185 bears the N6-succinyllysine; alternate mark. H200 acts as the Proton acceptor in catalysis. K203 bears the N6-succinyllysine mark. N6-acetyllysine; alternate is present on residues K215 and K239. N6-succinyllysine; alternate is present on residues K215 and K239. At K239 the chain carries N6-malonyllysine; alternate. At S246 the chain carries Phosphoserine. Residue M251 participates in NAD(+) binding. K269 is modified (N6-succinyllysine). K296, K301, K307, K314, and K324 each carry N6-acetyllysine; alternate. Residues K296, K301, K307, K314, and K324 each carry the N6-succinyllysine; alternate modification. N6-malonyllysine; alternate is present on K307. Position 326 is a phosphoserine (S326). N6-acetyllysine; alternate is present on residues K328, K329, and K335. K328 carries the N6-succinyllysine; alternate modification. K329 carries the N6-malonyllysine; alternate modification. K335 carries the N6-succinyllysine; alternate modification.

This sequence belongs to the LDH/MDH superfamily. MDH type 1 family. Homodimer. Acetylation is enhanced after treatment either with trichostin A (TCA) or with nicotinamide (NAM) with the appearance of tri- and tetraacetylations. Glucose also increases acetylation.

The protein resides in the mitochondrion matrix. The enzyme catalyses (S)-malate + NAD(+) = oxaloacetate + NADH + H(+). Enzyme activity is enhanced by acetylation. The protein is Malate dehydrogenase, mitochondrial (MDH2) of Bos taurus (Bovine).